The following is a 117-amino-acid chain: Large ribosomal subunit protein eL34 (117 aa).

Ser12 carries the post-translational modification Phosphoserine. Lys36 and Lys43 each carry N6-acetyllysine. A Glycyl lysine isopeptide (Lys-Gly) (interchain with G-Cter in SUMO2) cross-link involves residue Lys108.

This sequence belongs to the eukaryotic ribosomal protein eL34 family. Component of the large ribosomal subunit.

The protein resides in the cytoplasm. It is found in the cytosol. It localises to the endoplasmic reticulum. Functionally, component of the large ribosomal subunit. The ribosome is a large ribonucleoprotein complex responsible for the synthesis of proteins in the cell. The polypeptide is Large ribosomal subunit protein eL34 (RPL34) (Sus scrofa (Pig)).